The chain runs to 365 residues: Regulatory protein RapG (365 aa).

5 TPR repeats span residues Gly135–Leu168, Ala169–Leu202, Ala209–Ala242, Ser244–Arg284, and Arg326–Ile359.

Belongs to the Rap family.

The protein localises to the cytoplasm. With respect to regulation, inhibited by PhrG. Its function is as follows. Involved in the regulation of expression of DegU-controlled genes. Inhibits the binding of DegU to the promoter regions of aprE, coding for an extracellular alkaline protease, and comK, a master regulator for development of genetic competence. RapG does not stimulate dephosphorylation of DegU-P. The sequence is that of Regulatory protein RapG (rapG) from Bacillus subtilis (strain 168).